A 334-amino-acid polypeptide reads, in one-letter code: Ferredoxin--NADP reductase (334 aa).

Positions 33, 41, 46, 86, 120, 286, and 327 each coordinate FAD.

This sequence belongs to the ferredoxin--NADP reductase type 2 family. In terms of assembly, homodimer. Requires FAD as cofactor.

It carries out the reaction 2 reduced [2Fe-2S]-[ferredoxin] + NADP(+) + H(+) = 2 oxidized [2Fe-2S]-[ferredoxin] + NADPH. This is Ferredoxin--NADP reductase from Rickettsia massiliae (strain Mtu5).